The primary structure comprises 333 residues: N-acetyl-gamma-glutamyl-phosphate reductase (333 aa).

Residue Cys-145 is part of the active site.

This sequence belongs to the NAGSA dehydrogenase family. Type 1 subfamily.

The protein localises to the cytoplasm. The enzyme catalyses N-acetyl-L-glutamate 5-semialdehyde + phosphate + NADP(+) = N-acetyl-L-glutamyl 5-phosphate + NADPH + H(+). It participates in amino-acid biosynthesis; L-arginine biosynthesis; N(2)-acetyl-L-ornithine from L-glutamate: step 3/4. Its function is as follows. Catalyzes the NADPH-dependent reduction of N-acetyl-5-glutamyl phosphate to yield N-acetyl-L-glutamate 5-semialdehyde. In Salinispora tropica (strain ATCC BAA-916 / DSM 44818 / JCM 13857 / NBRC 105044 / CNB-440), this protein is N-acetyl-gamma-glutamyl-phosphate reductase.